The chain runs to 508 residues: Light-independent protochlorophyllide reductase subunit B (508 aa).

Position 36 (Asp36) interacts with [4Fe-4S] cluster. The active-site Proton donor is Asp294. Position 429–430 (429–430 (GM)) interacts with substrate.

The protein belongs to the ChlB/BchB/BchZ family. Protochlorophyllide reductase is composed of three subunits; ChlL, ChlN and ChlB. Forms a heterotetramer of two ChlB and two ChlN subunits. [4Fe-4S] cluster serves as cofactor.

The protein resides in the plastid. The protein localises to the chloroplast. The enzyme catalyses chlorophyllide a + oxidized 2[4Fe-4S]-[ferredoxin] + 2 ADP + 2 phosphate = protochlorophyllide a + reduced 2[4Fe-4S]-[ferredoxin] + 2 ATP + 2 H2O. It participates in porphyrin-containing compound metabolism; chlorophyll biosynthesis (light-independent). In terms of biological role, component of the dark-operative protochlorophyllide reductase (DPOR) that uses Mg-ATP and reduced ferredoxin to reduce ring D of protochlorophyllide (Pchlide) to form chlorophyllide a (Chlide). This reaction is light-independent. The NB-protein (ChlN-ChlB) is the catalytic component of the complex. This is Light-independent protochlorophyllide reductase subunit B from Pyropia yezoensis (Susabi-nori).